The chain runs to 161 residues: Phosphopantetheine adenylyltransferase (161 aa).

Threonine 10 is a binding site for substrate. Residues 10–11 and histidine 18 contribute to the ATP site; that span reads TF. Lysine 42, leucine 74, and arginine 88 together coordinate substrate. ATP is bound by residues 89–91, glutamate 99, and 124–130; these read GIR and WRYLSST.

The protein belongs to the bacterial CoaD family. As to quaternary structure, homohexamer. Mg(2+) serves as cofactor.

It is found in the cytoplasm. It catalyses the reaction (R)-4'-phosphopantetheine + ATP + H(+) = 3'-dephospho-CoA + diphosphate. The protein operates within cofactor biosynthesis; coenzyme A biosynthesis; CoA from (R)-pantothenate: step 4/5. Reversibly transfers an adenylyl group from ATP to 4'-phosphopantetheine, yielding dephospho-CoA (dPCoA) and pyrophosphate. The chain is Phosphopantetheine adenylyltransferase from Haemophilus ducreyi (strain 35000HP / ATCC 700724).